Consider the following 944-residue polypeptide: Calcium-transporting ATPase type 2C member 2 (944 aa).

At 1–104 (MGRRFKFLQK…DNTEPVWKKY (104 aa)) the chain is on the cytoplasmic side. The interval 69-93 (VDLDSGLSEFAVAQRRLVHGWNEFV) is interaction with ORAI1. The helical transmembrane segment at 105-125 (LDQFRNPLILLLLGSSVVSVL) threads the bilayer. Residues 126 to 127 (TK) lie on the Extracellular side of the membrane. The helical transmembrane segment at 128-148 (EYEDAISIALAVLIVVTVGFI) threads the bilayer. The Cytoplasmic portion of the chain corresponds to 149–229 (QEYRSEKSLE…EVEPCSKTDS (81 aa)). A helical transmembrane segment spans residues 230–250 (PLAGGGDLSTLSNVVFMGTLV). Over 251–291 (QCGKGQGVVIGTGEQSQFGEVFKMMRAEETPKTPLQKSMDK) the chain is Extracellular. Threonine 262 carries the post-translational modification Phosphothreonine. Serine 266 bears the Phosphoserine mark. A helical transmembrane segment spans residues 292 to 312 (LGKQLTVFSFGIIGLLMLVGW). Over 313–329 (VQGKPLLSMFTIGVSLA) the chain is Cytoplasmic. Valine 330, alanine 331, isoleucine 333, and glutamate 335 together coordinate Ca(2+). A helical transmembrane segment spans residues 330–350 (VAAIPEGLPIVVMVTLVLGVL). Residues 351–748 (RMAKKRVIVK…IAALSLITLS (398 aa)) lie on the Extracellular side of the membrane. The 4-aspartylphosphate intermediate role is filled by aspartate 377. 2 residues coordinate Mg(2+): aspartate 672 and aspartate 676. A helical membrane pass occupies residues 749–769 (TVCNLPNPLNAMQILWVNIIM). Ca(2+) is bound by residues asparagine 766 and aspartate 770. The Cytoplasmic segment spans residues 770–802 (DGPPAQSLGVEPVDRDALKRPPRSVKDTILNRA). Residues 803-823 (LILKILMSAAVILGGTLFIFW) traverse the membrane as a helical segment. Residues 824–835 (REIPENRTSTPR) are Extracellular-facing. A helical membrane pass occupies residues 836-853 (TTTMAFTCFVFFDLFNAL). Residues 854–872 (SCRSQTKLIFEIGFFRNRM) are Cytoplasmic-facing. The helical transmembrane segment at 873 to 893 (FLYSILGSLLGQLAVIYAPPL) threads the bilayer. At 894–903 (QKVFQTENLS) the chain is on the extracellular side. A helical membrane pass occupies residues 904-924 (ALDLLLLTGLASSVFILSELL). The Cytoplasmic segment spans residues 925–944 (KLCEKFCSRAKADQMLPEAV).

Belongs to the cation transport ATPase (P-type) (TC 3.A.3) family. Type IIA subfamily. As to quaternary structure, interacts (via N-terminus) with ORAI1 (via N- and C-termini); this interaction regulates Ca(2+) influx at the plasma membrane.

Its subcellular location is the golgi apparatus. It localises to the trans-Golgi network membrane. The protein localises to the cell membrane. It is found in the basolateral cell membrane. It carries out the reaction Ca(2+)(in) + ATP + H2O = Ca(2+)(out) + ADP + phosphate + H(+). It catalyses the reaction Mn(2+)(in) + ATP + H2O = Mn(2+)(out) + ADP + phosphate + H(+). Functionally, ATP-driven pump that supplies the Golgi apparatus with Ca(2+) and Mn(2+) ions, both essential cofactors for processing and trafficking of newly synthesized proteins in the secretory pathway. Within a catalytic cycle, acquires Ca(2+) or Mn(2+) ions on the cytoplasmic side of the membrane and delivers them to the lumenal side. The transfer of ions across the membrane is coupled to ATP hydrolysis and is associated with a transient phosphorylation that shifts the pump conformation from inward-facing to outward-facing state. Induces Ca(2+) influx independently of its ATP-driven pump function. At the basolateral membrane of mammary epithelial cells, interacts with Ca(2+) channel ORAI1 and mediates Ca(2+) entry independently of the Ca(2+) content of endoplasmic reticulum or Golgi stores. May facilitate transepithelial transport of large quantities of Ca(2+) for milk secretion via activation of Ca(2+) influx channels at the plasma membrane and active Ca(2+) transport at the Golgi apparatus. In Rattus norvegicus (Rat), this protein is Calcium-transporting ATPase type 2C member 2 (Atp2c2).